A 549-amino-acid chain; its full sequence is Eukaryotic translation initiation factor 3 subunit D (549 aa).

A disordered region spans residues 101–130 (QSYQRGRARGQRGRGARGARTPGGMTTLNK). The segment covering 106-117 (GRARGQRGRGAR) has biased composition (basic residues). The tract at residues 277-291 (EFDLLTVNETSVEPP) is RNA gate. Positions 521–549 (ESDASEESGDEQADTPFAPLYSYGNSKRV) are disordered. The span at 523–533 (DASEESGDEQA) shows a compositional bias: acidic residues.

Belongs to the eIF-3 subunit D family. Component of the eukaryotic translation initiation factor 3 (eIF-3) complex.

Its subcellular location is the cytoplasm. Its function is as follows. mRNA cap-binding component of the eukaryotic translation initiation factor 3 (eIF-3) complex, which is involved in protein synthesis of a specialized repertoire of mRNAs and, together with other initiation factors, stimulates binding of mRNA and methionyl-tRNAi to the 40S ribosome. The eIF-3 complex specifically targets and initiates translation of a subset of mRNAs involved in cell proliferation. In the eIF-3 complex, eif3d specifically recognizes and binds the 7-methylguanosine cap of a subset of mRNAs. In Bombyx mori (Silk moth), this protein is Eukaryotic translation initiation factor 3 subunit D.